A 371-amino-acid polypeptide reads, in one-letter code: Aspartate-semialdehyde dehydrogenase (371 aa).

NADP(+) is bound by residues Arg10 to Val13, Thr37 to Ser38, and Gln74. Residue Arg103 coordinates phosphate. Cys136 acts as the Acyl-thioester intermediate in catalysis. Residue Gln163 coordinates substrate. Ser166 is a binding site for NADP(+). Position 243 (Glu243) interacts with substrate. Lys246 provides a ligand contact to phosphate. Arg270 contributes to the substrate binding site. Catalysis depends on His277, which acts as the Proton acceptor. An NADP(+)-binding site is contributed by Gln353.

Belongs to the aspartate-semialdehyde dehydrogenase family. As to quaternary structure, homodimer.

It catalyses the reaction L-aspartate 4-semialdehyde + phosphate + NADP(+) = 4-phospho-L-aspartate + NADPH + H(+). Its pathway is amino-acid biosynthesis; L-lysine biosynthesis via DAP pathway; (S)-tetrahydrodipicolinate from L-aspartate: step 2/4. The protein operates within amino-acid biosynthesis; L-methionine biosynthesis via de novo pathway; L-homoserine from L-aspartate: step 2/3. It participates in amino-acid biosynthesis; L-threonine biosynthesis; L-threonine from L-aspartate: step 2/5. Its function is as follows. Catalyzes the NADPH-dependent formation of L-aspartate-semialdehyde (L-ASA) by the reductive dephosphorylation of L-aspartyl-4-phosphate. This chain is Aspartate-semialdehyde dehydrogenase, found in Haemophilus influenzae (strain ATCC 51907 / DSM 11121 / KW20 / Rd).